The primary structure comprises 423 residues: uncharacterized protein (423 aa).

Substrate contacts are provided by serine 51, aspartate 138, and asparagine 150. ATP is bound by residues 170–171 and 214–220; these read TD and TGGMRTK. The 92-residue stretch at 315 to 406 folds into the PUA domain; that stretch reads KGAIIIDENS…EKIHDVLGYS (92 aa).

Belongs to the glutamate 5-kinase family.

It is found in the cytoplasm. This is an uncharacterized protein from Saccharomyces cerevisiae (strain ATCC 204508 / S288c) (Baker's yeast).